A 407-amino-acid polypeptide reads, in one-letter code: Phosphopentomutase (407 aa).

Residues Asp-10, Asp-306, His-311, Asp-347, His-348, and His-359 each contribute to the Mn(2+) site.

It belongs to the phosphopentomutase family. Mn(2+) is required as a cofactor.

Its subcellular location is the cytoplasm. The catalysed reaction is 2-deoxy-alpha-D-ribose 1-phosphate = 2-deoxy-D-ribose 5-phosphate. It carries out the reaction alpha-D-ribose 1-phosphate = D-ribose 5-phosphate. The protein operates within carbohydrate degradation; 2-deoxy-D-ribose 1-phosphate degradation; D-glyceraldehyde 3-phosphate and acetaldehyde from 2-deoxy-alpha-D-ribose 1-phosphate: step 1/2. Its function is as follows. Isomerase that catalyzes the conversion of deoxy-ribose 1-phosphate (dRib-1-P) and ribose 1-phosphate (Rib-1-P) to deoxy-ribose 5-phosphate (dRib-5-P) and ribose 5-phosphate (Rib-5-P), respectively. The chain is Phosphopentomutase from Buchnera aphidicola subsp. Acyrthosiphon pisum (strain Tuc7).